A 146-amino-acid chain; its full sequence is Bacterial hemoglobin (146 aa).

A Globin domain is found at 1–138; it reads MLDQQTINII…IADVFIQVEA (138 aa). Heme b contacts are provided by Gln-53 and His-85.

Belongs to the globin family. Homodimer.

Its function is as follows. This protein functions as a terminal oxidase. This is Bacterial hemoglobin (vhb) from Vitreoscilla stercoraria.